A 253-amino-acid chain; its full sequence is MIAPSLSSGVEQLGDMIAHASSIVPFTGAGISTESGIPDFRSPGGLWSRNQPIPFDEFVARQDARDEAWRRRFAMEQTFAKARPARGHRALASLYKAGKVPAIITQNIDNLHQVSGFAEHDVVELHGNTTYARCIGCGKRHELDWVREWFFRTGHAPHCTACDEPVKTATVSFGQSMPSDAMRRATELAQHCDLFIAIGSSLVVWPAAGFPMLAKECGAKLVIINREPTEQDEIADLVIRHDIGETLGPFVGN.

The Deacetylase sirtuin-type domain occupies 3-253 (APSLSSGVEQ…GETLGPFVGN (251 aa)). NAD(+) is bound by residues Ala-29, Thr-33, Phe-40, Arg-41, Gln-106, Ile-108, Asp-109, and His-126. Phe-40 is a nicotinamide binding site. 2 residues coordinate nicotinamide: Ile-108 and Asp-109. Catalysis depends on His-126, which acts as the Proton acceptor. Cys-134, Cys-137, Cys-159, and Cys-162 together coordinate Zn(2+). NAD(+) is bound by residues Ser-200, Ser-201, Asn-225, Asp-242, and Ile-243.

The protein belongs to the sirtuin family. Class U subfamily. Zn(2+) is required as a cofactor.

The protein localises to the cytoplasm. It carries out the reaction N(6)-acetyl-L-lysyl-[protein] + NAD(+) + H2O = 2''-O-acetyl-ADP-D-ribose + nicotinamide + L-lysyl-[protein]. In terms of biological role, NAD-dependent protein deacetylase which modulates the activities of several enzymes which are inactive in their acetylated form. This is NAD-dependent protein deacetylase from Rhodopseudomonas palustris (strain ATCC BAA-98 / CGA009).